Here is a 258-residue protein sequence, read N- to C-terminus: Immediate-early protein IE-0 (258 aa).

The segment at 191-237 (CNICEDSSAEEQFLKPNVCCGYRVCNACYAKLWEFCTGAYPVCPICK) adopts an RING-type zinc-finger fold.

The protein is Immediate-early protein IE-0 (IE-0) of Lymantria dispar multicapsid nuclear polyhedrosis virus (LdMNPV).